Consider the following 184-residue polypeptide: Isopentenyl-diphosphate Delta-isomerase (184 aa).

The Mn(2+) site is built by His-25 and His-32. Positions 30–164 constitute a Nudix hydrolase domain; the sequence is PLHLAFSCWL…PWAFSPWMVL (135 aa). Cys-67 is a catalytic residue. His-69 provides a ligand contact to Mn(2+). Glu-87 provides a ligand contact to Mg(2+). The Mn(2+) site is built by Glu-114 and Glu-116. Glu-116 is a catalytic residue.

This sequence belongs to the IPP isomerase type 1 family. Homodimer. The cofactor is Mg(2+). Mn(2+) serves as cofactor.

The protein localises to the cytoplasm. It carries out the reaction isopentenyl diphosphate = dimethylallyl diphosphate. The protein operates within isoprenoid biosynthesis; dimethylallyl diphosphate biosynthesis; dimethylallyl diphosphate from isopentenyl diphosphate: step 1/1. Functionally, catalyzes the 1,3-allylic rearrangement of the homoallylic substrate isopentenyl (IPP) to its highly electrophilic allylic isomer, dimethylallyl diphosphate (DMAPP). The protein is Isopentenyl-diphosphate Delta-isomerase of Klebsiella pneumoniae (strain 342).